Consider the following 530-residue polypeptide: Amidase FVEG_08295 (530 aa).

Residues Lys-138 and Ser-214 each act as charge relay system in the active site. Substrate-binding positions include Ser-214 and 235-238 (IAGS). Catalysis depends on Ser-238, which acts as the Acyl-ester intermediate.

This sequence belongs to the amidase family.

The catalysed reaction is a monocarboxylic acid amide + H2O = a monocarboxylate + NH4(+). It functions in the pathway xenobiotic degradation. In terms of biological role, amidase; part of the Fusarium detoxification of benzoxazolinone cluster 1 (FDB1) involved in the degradation of benzoxazolinones produced by the host plant. Maize, wheat, and rye produce the 2 benzoxazinone phytoanticipins 2,4-dihy-droxy-7-methoxy-1,4-benzoxazin-3-one (DIMBOA) and 2,4-dihydroxy-1,4-benzoxazin-3-one (DIBOA) that, due to their inherent instability once released, spontaneously degrade to the more stable corresponding benzoxazolinones, 6-methoxy-2-benzoxazolinone (MBOA) and 2-benzoxazolinone (BOA), respectively. The first step in the detoxification of benzoxazolinones involves the hydrolysis of the cyclic ester bond of benzoxazolinones by the FDB1 cluster gamma-lactamase MBL1 to aminophenols. MBL1 is able to convert BOA into 2-aminophenol (2-AP), as well as MBOA into 5-methoxy-2-aminophenol (2-AMP). The FDB2 cluster N-malonyltransferase FDB2/NAT1 then metabolizes aminophenols via N-malonylation to non-toxic malonamic acids. FDB2/NAT1 converts 2-AP into N-(2-hydroxyphenyl) malonamic acid (HPMA) and 2-AMP into N-(2-hydroxy-4-methoxyphenyl) malonamic acid (HMPMA). The duplicated dienlactone hydrolases DLH1 and DLH2 may provide redundant function for hydrolyzing the lactone moiety in the BOA molecule. The roles of the amidases an other enzymes encoded by the 2 FDB clusters have not been identified so far. The sequence is that of Amidase FVEG_08295 from Gibberella moniliformis (strain M3125 / FGSC 7600) (Maize ear and stalk rot fungus).